The sequence spans 333 residues: Adenosine deaminase (333 aa).

Zn(2+)-binding residues include His-12 and His-14. Substrate is bound by residues His-14, Asp-16, and Gly-170. His-197 lines the Zn(2+) pocket. Glu-200 serves as the catalytic Proton donor. Asp-278 contacts Zn(2+). Asp-279 is a binding site for substrate.

This sequence belongs to the metallo-dependent hydrolases superfamily. Adenosine and AMP deaminases family. Adenosine deaminase subfamily. Zn(2+) serves as cofactor.

It catalyses the reaction adenosine + H2O + H(+) = inosine + NH4(+). It carries out the reaction 2'-deoxyadenosine + H2O + H(+) = 2'-deoxyinosine + NH4(+). Functionally, catalyzes the hydrolytic deamination of adenosine and 2-deoxyadenosine. This chain is Adenosine deaminase, found in Escherichia coli O139:H28 (strain E24377A / ETEC).